Consider the following 827-residue polypeptide: WD repeat-containing protein 27 (827 aa).

WD repeat units lie at residues 3–57 (NPQD…IWNT), 62–101 (HQLL…MWNL), 112–151 (LVPR…MLDI), 155–194 (AVRA…VWDH), 201–237 (YSSS…IFSL), 292–337 (FPVL…LANL), 344–387 (YYKD…VLEI), 502–542 (KPGP…VFDA), 546–584 (GTPA…MWSA), 590–629 (ALLL…RYHI), 646–687 (KLIC…VFDL), 698–740 (EAHS…LWDL), 746–784 (ERHF…VYEM), and 788–826 (TFSH…LFLA).

This chain is WD repeat-containing protein 27 (WDR27), found in Homo sapiens (Human).